Here is a 520-residue protein sequence, read N- to C-terminus: Amine oxidase [flavin-containing] B (520 aa).

Ser-2 bears the N-acetylserine mark. Over 2-489 (SNKCDVVVVG…TFLERHLPSV (488 aa)) the chain is Cytoplasmic. Residue Lys-52 is modified to N6-acetyllysine. Cys-397 carries the post-translational modification S-8alpha-FAD cysteine. The chain crosses the membrane as a helical; Anchor for type IV membrane protein span at residues 490 to 516 (PGLLRLIGLTTIFSATALGFLAHKRGL). Residues 517–520 (LVRV) lie on the Mitochondrial intermembrane side of the membrane.

Monomer, homo- or heterodimer (containing two subunits of similar size). Each subunit contains a covalently bound flavin. Enzymatically active as monomer. FAD is required as a cofactor.

Its subcellular location is the mitochondrion outer membrane. It carries out the reaction a secondary aliphatic amine + O2 + H2O = a primary amine + an aldehyde + H2O2. It catalyses the reaction (R)-adrenaline + O2 + H2O = (R)-3,4-dihydroxymandelaldehyde + methylamine + H2O2. The catalysed reaction is a primary methyl amine + O2 + H2O = an aldehyde + H2O2 + NH4(+). The enzyme catalyses benzylamine + O2 + H2O = benzaldehyde + H2O2 + NH4(+). It carries out the reaction dopamine + O2 + H2O = 3,4-dihydroxyphenylacetaldehyde + H2O2 + NH4(+). It catalyses the reaction tyramine + O2 + H2O = (4-hydroxyphenyl)acetaldehyde + H2O2 + NH4(+). The catalysed reaction is (R)-noradrenaline + O2 + H2O = (R)-3,4-dihydroxymandelaldehyde + H2O2 + NH4(+). The enzyme catalyses 2-phenylethylamine + O2 + H2O = 2-phenylacetaldehyde + H2O2 + NH4(+). It carries out the reaction N-acetylputrescine + O2 + H2O = 4-acetamidobutanal + H2O2 + NH4(+). Inhibited by deprenyl. Its function is as follows. Catalyzes the oxidative deamination of primary and some secondary amines such as neurotransmitters, and exogenous amines including the tertiary amine, neurotoxin 1-methyl-4-phenyl-1,2,3,6-tetrahydropyridine (MPTP), with concomitant reduction of oxygen to hydrogen peroxide and participates in the metabolism of neuroactive and vasoactive amines in the central nervous system and peripheral tissues. Preferentially degrades benzylamine and phenylethylamine. The sequence is that of Amine oxidase [flavin-containing] B from Homo sapiens (Human).